Here is a 309-residue protein sequence, read N- to C-terminus: Cyclin-dependent kinase B1-1 (309 aa).

Residues 4–301 enclose the Protein kinase domain; the sequence is YEKLEKVGEG…AKTALDHPYF (298 aa). ATP contacts are provided by residues 10 to 18 and K33; that span reads VGEGTYGKV. Y15 is modified (phosphotyrosine). Residue D142 is the Proton acceptor of the active site. T176 bears the Phosphothreonine; by CAK mark.

Belongs to the protein kinase superfamily. CMGC Ser/Thr protein kinase family. CDC2/CDKX subfamily. Interacts with CKS1. Interacts with CYCU3-1. Interacts with SIM, SMR1 and SMR2. Highly expressed in guard cells and stomatal precursor cells of cotyledons. Expressed in roots, stems, flowers and siliques.

It localises to the nucleus. The enzyme catalyses L-seryl-[protein] + ATP = O-phospho-L-seryl-[protein] + ADP + H(+). It catalyses the reaction L-threonyl-[protein] + ATP = O-phospho-L-threonyl-[protein] + ADP + H(+). The catalysed reaction is [DNA-directed RNA polymerase] + ATP = phospho-[DNA-directed RNA polymerase] + ADP + H(+). Phosphorylation at Thr-14 or Tyr-15 inactivates the enzyme, while phosphorylation at Thr-176 activates it. In terms of biological role, may control G2/M (mitosis) phase progression. Plays a role in regulating seedling growth in darkness via regulation of hypocotyl cell elongation and cotyledon cell development. Plays a role in stomatal development. Required to suppress endoreduplication. Together with CDKB1-2, promotes both the last division in the stomatal cell lineage as well as the number of stomata. In collaboration with MYB124 and MYB88, restrict the G1/S transition and chloroplast and nuclear number during stomatal formation, and normally maintain fate and developmental progression throughout the stomatal cell lineage. This chain is Cyclin-dependent kinase B1-1 (CDKB1-1), found in Arabidopsis thaliana (Mouse-ear cress).